Consider the following 224-residue polypeptide: 7-cyano-7-deazaguanine synthase (224 aa).

8-18 lines the ATP pocket; that stretch reads LSGGMDSAAVI. Zn(2+)-binding residues include Cys186, Cys196, Cys199, and Cys202.

The protein belongs to the QueC family. The cofactor is Zn(2+).

It carries out the reaction 7-carboxy-7-deazaguanine + NH4(+) + ATP = 7-cyano-7-deazaguanine + ADP + phosphate + H2O + H(+). The protein operates within purine metabolism; 7-cyano-7-deazaguanine biosynthesis. In terms of biological role, catalyzes the ATP-dependent conversion of 7-carboxy-7-deazaguanine (CDG) to 7-cyano-7-deazaguanine (preQ(0)). In Xanthomonas oryzae pv. oryzae (strain MAFF 311018), this protein is 7-cyano-7-deazaguanine synthase.